The sequence spans 1469 residues: Regulation of nuclear pre-mRNA domain-containing protein 2 (1469 aa).

The residue at position 2 (Ala2) is an N-acetylalanine. Ser16 is modified (phosphoserine). One can recognise a CID domain in the interval 19 to 149; it reads SAGALESSLD…ALREALMDRA (131 aa). Disordered stretches follow at residues 329–445 and 489–524; these read STLP…TAAP and TGVS…PSHN. Residues 370–386 are compositionally biased toward basic and acidic residues; sequence ESDKSATPEPVTDNRDV. Phosphoserine is present on Ser374. The residue at position 376 (Thr376) is a Phosphothreonine. Residues 387–396 show a composition bias toward acidic residues; that stretch reads EDMELSDVED. Ser392 is modified (phosphoserine). Positions 397–412 are enriched in basic and acidic residues; it reads DGSKIIVEDRKEKPVE. A compositionally biased stretch (polar residues) spans 419–430; sequence GVPTKSTESVSK. Pro residues predominate over residues 434 to 445; it reads CAPPSVPTTAAP. Phosphoserine is present on residues Ser492, Ser495, Ser498, and Ser504. Position 536 is a phosphothreonine (Thr536). Residues 572–594 are disordered; sequence ASEVTSQSTTASPASTTGSAVKG. Positions 576–591 are enriched in low complexity; the sequence is TSQSTTASPASTTGSA. Phosphoserine occurs at positions 583 and 612. Thr617 carries the phosphothreonine modification. Phosphoserine is present on Ser633. Residues 647 to 656 are compositionally biased toward polar residues; it reads SLGFTGTHNP. 7 disordered regions span residues 647–686, 716–867, 919–1013, 1033–1140, 1154–1183, 1204–1328, and 1368–1414; these read SLGF…TSPS, SSAP…AMMN, SENC…SGVE, KNAS…HGRE, SSFD…FKTT, FNST…PTPP, and GPGL…HRDA. Phosphoserine is present on residues Ser682, Ser684, Ser735, and Ser738. Thr742 is modified (phosphothreonine). Ser749 carries the phosphoserine modification. Residue Thr751 is modified to Phosphothreonine. The span at 761–771 shows a compositional bias: polar residues; that stretch reads PTSSSVDTMSL. A phosphoserine mark is found at Ser777 and Ser781. Positions 777–787 are enriched in low complexity; that stretch reads SPGSSTPSSTR. A Phosphothreonine modification is found at Thr782. Phosphoserine occurs at positions 788, 836, 845, 919, and 947. Over residues 959–982 the composition is skewed to polar residues; sequence PDSNHSGLSQSTAGHLTLPQTQYP. Ser984 and Ser995 each carry phosphoserine. The segment covering 1047–1073 has biased composition (polar residues); that stretch reads QTPNKGTSSDGVSLSNLTQPSLPTTDQ. A phosphoserine mark is found at Ser1086 and Ser1117. Over residues 1159-1168 the composition is skewed to low complexity; sequence GPSSASELAS. The segment covering 1169-1178 has biased composition (gly residues); sequence LGGGGSGGLT. Residues 1272–1295 are compositionally biased toward pro residues; sequence GPPPPPGEHSGVPFPPPPPPPPPG. At Arg1375 the chain carries Asymmetric dimethylarginine. Low complexity-rich tracts occupy residues 1377–1390 and 1400–1409; these read SLSL…HLGP and TSSSGLPLSP. Residues Arg1432 and Arg1438 each carry the asymmetric dimethylarginine modification.

As to quaternary structure, associates with the RNA polymerase II complex.

This Mus musculus (Mouse) protein is Regulation of nuclear pre-mRNA domain-containing protein 2 (Rprd2).